Consider the following 278-residue polypeptide: Deoxyribonuclease-1-like 2 (278 aa).

Residues 1–21 (MGWPWAPLTAVWALGVMGATA) form the signal peptide. Residues Glu99 and His150 contribute to the active site. The cysteines at positions 189 and 225 are disulfide-linked.

This sequence belongs to the DNase I family. Requires Mg(2+) as cofactor. The cofactor is Ca(2+).

The protein localises to the cytoplasm. It is found in the secreted. Its function is as follows. Divalent cation-dependent acid DNA endonuclease involved in the breakdown of the nucleus during corneocyte formation of epidermal keratinocytes. May play an immune role by eliminating harmful DNA released into the extracellular environment by damaged epidermal cells. The polypeptide is Deoxyribonuclease-1-like 2 (Dnase1l2) (Mus musculus (Mouse)).